Here is a 1170-residue protein sequence, read N- to C-terminus: WD repeat-containing protein 35 (1170 aa).

WD repeat units follow at residues 12–51 (PNNV…DDSK), 69–108 (GHSG…WYEE), 113–152 (RNKS…IWGK), 154–193 (LKGI…IMKM), and 491–528 (GTRD…LIQK).

In terms of assembly, component of the IFT complex A (IFT-A) complex. IFT-A complex is divided into a core subcomplex composed of IFT122:IFT140:WDR19 which is associated with TULP3 and a peripheral subcomplex composed of IFT43:WDR35:TTC21B. Interacts directy with IFT122, ITF43 and TTC21B. Interacts with IFT43. Interacts with CFAP61. In terms of tissue distribution, expressed at high levels in testis and at lower levels in the brain (at protein level). Also present in other tissues, including heart, uterus, spinal cord, ovary, liver, kidney, lung, pancreas and stomach.

The protein localises to the cytoplasm. The protein resides in the cytoskeleton. It localises to the microtubule organizing center. It is found in the centrosome. Its subcellular location is the cilium axoneme. The protein localises to the cilium basal body. Its function is as follows. As a component of the IFT complex A (IFT-A), a complex required for retrograde ciliary transport and entry into cilia of G protein-coupled receptors (GPCRs), it is involved in ciliogenesis and ciliary protein trafficking. May promote CASP3 activation and TNF-stimulated apoptosis. The chain is WD repeat-containing protein 35 (Wdr35) from Rattus norvegicus (Rat).